We begin with the raw amino-acid sequence, 165 residues long: MTILNSLNQFSKGRLSWLLLLLFVVFFEACALYFQHVMMLAPCVMCIYERVAMMGVGVAAIVGLMAPNNPIFRWLGLIGWGLSSYKGLLLAQQHVDYQFNPSPFATCDLFVTFPSWRPLNQWAPWIFEAYGDCSKIVWQFLDLSMPQWLVVIFAGNLIALALIVI.

The Cytoplasmic segment spans residues 1–16 (MTILNSLNQFSKGRLS). Residues 17-33 (WLLLLLFVVFFEACALY) traverse the membrane as a helical segment. The Periplasmic portion of the chain corresponds to 34–51 (FQHVMMLAPCVMCIYERV). The cysteines at positions 43 and 46 are disulfide-linked. A helical membrane pass occupies residues 52–67 (AMMGVGVAAIVGLMAP). The Cytoplasmic portion of the chain corresponds to 68-74 (NNPIFRW). Residues 75–92 (LGLIGWGLSSYKGLLLAQ) form a helical membrane-spanning segment. The Periplasmic portion of the chain corresponds to 93–147 (QHVDYQFNPSPFATCDLFVTFPSWRPLNQWAPWIFEAYGDCSKIVWQFLDLSMPQ). A disulfide bridge connects residues cysteine 107 and cysteine 133. The chain crosses the membrane as a helical span at residues 148-165 (WLVVIFAGNLIALALIVI).

This sequence belongs to the DsbB family.

The protein localises to the cell inner membrane. Required for disulfide bond formation in some periplasmic proteins. Acts by oxidizing the DsbA protein. The sequence is that of Disulfide bond formation protein B from Vibrio alginolyticus.